The following is a 292-amino-acid chain: MIRRENRLRREFIFRKSLEEKQKSLEEKREKIRNALENNTKIDYNLRKDAIELAKGSDWGGQQYETDSEYRWAGAQDPKIVITTSRDPSSRLKMFAKEMKLIFPNAQRINRGHYDVKQVVQASKAQDSTDLIIFTETRGNPDGMLVCHLPFGPTAFFSMANVVMRHDIPNCGTMSEQYPHLIFDNLNSKLGHRFTTILKHLFPVPKPDSKRIITFSNSEDYISFRHHVYKTENDGEVELTEAGPRFELKPYQIKLGTLETLAAAEDEWVLRSYTNTARKRTFLSISRADDDE.

The Brix domain maps to 78-259 (PKIVITTSRD…PYQIKLGTLE (182 aa)).

The protein is Brix domain-containing protein ZK795.3 of Caenorhabditis elegans.